A 69-amino-acid chain; its full sequence is Fungal defensin oryzeasin (69 aa).

A signal peptide spans 1 to 18 (MKLLTVAFSLLLLGQVHA). A propeptide spanning residues 19 to 26 (SPLVLDKR) is cleaved from the precursor. Intrachain disulfides connect cysteine 29–cysteine 60, cysteine 44–cysteine 66, and cysteine 48–cysteine 68.

The protein belongs to the invertebrate defensin family.

The protein resides in the secreted. It is found in the target cell membrane. Its function is as follows. Shows antibacterial activity against numerous Gram-positive bacteria. It selectively inhibits peptidoglycan biosynthesis through complex formation with the cell wall precursor lipid II (1:1 molar ratio) thus inhibiting cell wall synthesis. This is Fungal defensin oryzeasin from Aspergillus oryzae (strain ATCC 42149 / RIB 40) (Yellow koji mold).